The sequence spans 779 residues: Phosphatidylinositol 4-phosphate 5-kinase 4 (779 aa).

Residues Q20 to I61 form a disordered region. The segment covering T39–T54 has biased composition (acidic residues). MORN repeat units follow at residues Y77–M99, Y100–T122, Y123–T145, Y146–V168, Y169–Y191, Y192–R214, Y215–F237, and Y238–D259. The PIPK domain maps to T382 to F775. The segment at Y735–S756 is activation loop.

It catalyses the reaction a 1,2-diacyl-sn-glycero-3-phospho-(1D-myo-inositol 4-phosphate) + ATP = a 1,2-diacyl-sn-glycero-3-phospho-(1D-myo-inositol-4,5-bisphosphate) + ADP + H(+). This is Phosphatidylinositol 4-phosphate 5-kinase 4 (PIP5K4) from Arabidopsis thaliana (Mouse-ear cress).